We begin with the raw amino-acid sequence, 241 residues long: Small ribosomal subunit protein uS2 (241 aa).

The protein belongs to the universal ribosomal protein uS2 family.

The protein is Small ribosomal subunit protein uS2 of Buchnera aphidicola subsp. Cinara cedri (strain Cc).